The chain runs to 30 residues: Uperin-6.2 (30 aa).

Expressed by the skin dorsal glands.

Its subcellular location is the secreted. The chain is Uperin-6.2 from Uperoleia inundata (Floodplain toadlet).